Reading from the N-terminus, the 346-residue chain is Cysteinyl leukotriene receptor 2 (346 aa).

Residues 1 to 42 are Extracellular-facing; it reads MERKFMSLQPSISVSEMEPNGTFSNNNSRNCTIENFKREFFP. 3 N-linked (GlcNAc...) asparagine glycosylation sites follow: Asn20, Asn26, and Asn30. The helical transmembrane segment at 43 to 63 threads the bilayer; that stretch reads IVYLIIFFWGVLGNGLSIYVF. Topologically, residues 64–72 are cytoplasmic; that stretch reads LQPYKKSTS. Residues 73–93 form a helical membrane-spanning segment; that stretch reads VNVFMLNLAISDLLFISTLPF. The Extracellular portion of the chain corresponds to 94-123; the sequence is RADYYLRGSNWIFGDLACRIMSYSLYVNMY. Cys111 and Cys187 form a disulfide bridge. A helical transmembrane segment spans residues 124-144; sequence SSIYFLTVLSVVRFLAMVHPF. Over 145 to 153 the chain is Cytoplasmic; that stretch reads RLLHVTSIR. A helical membrane pass occupies residues 154–174; that stretch reads SAWILCGIIWILIMASSIMLL. Over 175–204 the chain is Extracellular; it reads DSGSEQNGSVTSCLELNLYKIAKLQTMNYI. N-linked (GlcNAc...) asparagine glycosylation occurs at Asn181. A helical membrane pass occupies residues 205–225; it reads ALVVGCLLPFFTLSICYLLII. Residues 226 to 245 are Cytoplasmic-facing; sequence RVLLKVEVPESGLRVSHRKA. Residues 246–266 form a helical membrane-spanning segment; it reads LTTIIITLIIFFLCFLPYHTL. The Extracellular portion of the chain corresponds to 267–286; that stretch reads RTVHLTTWKVGLCKDRLHKA. A helical membrane pass occupies residues 287–307; sequence LVITLALAAANACFNPLLYYF. The Cytoplasmic portion of the chain corresponds to 308–346; it reads AGENFKDRLKSALRKGHPQKAKTKCVFPVSVWLRKETRV.

Belongs to the G-protein coupled receptor 1 family. Widely expressed, with highest levels in the heart, placenta, spleen, peripheral blood leukocytes and adrenal gland. In lung, expressed in the interstitial macrophages, and slightly in smooth muscle cells.

It localises to the cell membrane. In terms of biological role, receptor for cysteinyl leukotrienes. The response is mediated via a G-protein that activates a phosphatidylinositol-calcium second messenger system. Stimulation by BAY u9773, a partial agonist, induces specific contractions of pulmonary veins and might also have an indirect role in the relaxation of the pulmonary vascular endothelium. The rank order of affinities for the leukotrienes is LTC4 = LTD4 &gt;&gt; LTE4. In Homo sapiens (Human), this protein is Cysteinyl leukotriene receptor 2 (CYSLTR2).